We begin with the raw amino-acid sequence, 248 residues long: Homeotic protein ultrabithorax (248 aa).

The span at Gly-116–Ala-125 shows a compositional bias: gly residues. The interval Gly-116–Gly-191 is disordered. The segment covering Gly-126–Asn-139 has biased composition (low complexity). 2 stretches are compositionally biased toward gly residues: residues Thr-140 to Met-152 and Gly-182 to Gly-191. The Antp-type hexapeptide signature appears at Phe-241–Ala-246.

Belongs to the Antp homeobox family.

The protein localises to the nucleus. Its function is as follows. Sequence-specific transcription factor which is part of a developmental regulatory system that provides cells with specific positional identities on the anterior-posterior axis. Binds the consensus region 5'-TTAAT[GT][GA]-3'. The chain is Homeotic protein ultrabithorax (Ubx) from Musca domestica (House fly).